A 350-amino-acid chain; its full sequence is UDP-N-acetylenolpyruvoylglucosamine reductase (350 aa).

The 172-residue stretch at 24-195 (HVDATARWLL…VAVEFNLPLL (172 aa)) folds into the FAD-binding PCMH-type domain. Residue R172 is part of the active site. S245 (proton donor) is an active-site residue. E342 is an active-site residue.

It belongs to the MurB family. FAD is required as a cofactor.

It localises to the cytoplasm. It carries out the reaction UDP-N-acetyl-alpha-D-muramate + NADP(+) = UDP-N-acetyl-3-O-(1-carboxyvinyl)-alpha-D-glucosamine + NADPH + H(+). The protein operates within cell wall biogenesis; peptidoglycan biosynthesis. In terms of biological role, cell wall formation. This chain is UDP-N-acetylenolpyruvoylglucosamine reductase, found in Xanthomonas campestris pv. campestris (strain B100).